The following is a 152-amino-acid chain: Chemokine-like factor (152 aa).

Positions 13-133 constitute an MARVEL domain; it reads FCCTLKCFVK…DCALMCQKLR (121 aa). A run of 4 helical transmembrane segments spans residues 19-39, 46-66, 81-101, and 108-128; these read CFVK…FIVG, IVIT…YTCG, VINS…ALIP, and ILGG…CALM.

This sequence belongs to the chemokine-like factor family. Ubiquitous.

The protein resides in the membrane. Functionally, may play an important role in inflammation and regeneration of skeletal muscle. Essential for embryonic development. The sequence is that of Chemokine-like factor (Cklf) from Mus musculus (Mouse).